The chain runs to 781 residues: Putative amine oxidase [copper-containing] (781 aa).

A signal peptide spans Met1 to Ala34. Cys199 and Cys203 are oxidised to a cystine. A substrate-binding site is contributed by Phe385–Asn395. Catalysis depends on Asp387, which acts as the Proton acceptor. Cys405 and Cys432 are joined by a disulfide. Ile472–Tyr477 is a binding site for substrate. Residue Tyr475 is the Schiff-base intermediate with substrate; via topaquinone of the active site. 2',4',5'-topaquinone is present on Tyr475. Residues His525 and His527 each coordinate Cu cation. Ca(2+) is bound by residues Asp534, Asp536, Glu579, Phe671, Asp674, Glu676, Asp682, and Leu683. Mn(2+) contacts are provided by Asp534 and Asp536. Residue Asp682 coordinates Mn(2+). Position 693 (His693) interacts with Cu cation.

Belongs to the copper/topaquinone oxidase family. In terms of assembly, homodimer. It depends on Cu cation as a cofactor. Ca(2+) serves as cofactor. The cofactor is L-topaquinone. Requires Mn(2+) as cofactor. Post-translationally, topaquinone (TPQ) is generated by copper-dependent autoxidation of a specific tyrosyl residue. As to expression, prismatic layer of shell (at protein level). Expressed primarily in the mantle with highest level in the mantle edge and lower level in the mantle pallium.

Its subcellular location is the secreted. This is Putative amine oxidase [copper-containing] from Margaritifera margaritifera (Freshwater pearl mussel).